We begin with the raw amino-acid sequence, 270 residues long: MSMQTAKTKKITLNHLQAKKNHEKIIAITAYDALFAQMFDPIVDVILVGDSLNMSFFNQNDTLSASLEMMLYHTKAVCMGAKTPFIITDMPFGSYKDEKTALKNAIKVYKETQASAIKLEGGKEKAKLVKTLTNEGVIVVGHIGLMPQFVRLDGGYKIKGKNEEQQKKLLEDALSLEEAGVGLLVLEGITTPIAQVITQKIKIPTIGIGSGKDCDGQILVWSDMLGFFDSFKPKFVREYLKGKELVQKAIEQYADDVKKGFFPNELESYH.

Mg(2+) contacts are provided by Asp-50 and Asp-89. Residues 50–51, Asp-89, and Lys-118 contribute to the 3-methyl-2-oxobutanoate site; that span reads DS. Glu-120 contributes to the Mg(2+) binding site. The Proton acceptor role is filled by Glu-187.

Belongs to the PanB family. In terms of assembly, homodecamer; pentamer of dimers. Mg(2+) is required as a cofactor.

It is found in the cytoplasm. The catalysed reaction is 3-methyl-2-oxobutanoate + (6R)-5,10-methylene-5,6,7,8-tetrahydrofolate + H2O = 2-dehydropantoate + (6S)-5,6,7,8-tetrahydrofolate. It functions in the pathway cofactor biosynthesis; (R)-pantothenate biosynthesis; (R)-pantoate from 3-methyl-2-oxobutanoate: step 1/2. Catalyzes the reversible reaction in which hydroxymethyl group from 5,10-methylenetetrahydrofolate is transferred onto alpha-ketoisovalerate to form ketopantoate. This is 3-methyl-2-oxobutanoate hydroxymethyltransferase from Helicobacter acinonychis (strain Sheeba).